The chain runs to 396 residues: Acetate kinase (396 aa).

Position 8 (Asn-8) interacts with Mg(2+). Lys-15 serves as a coordination point for ATP. Arg-89 is a substrate binding site. Asp-146 functions as the Proton donor/acceptor in the catalytic mechanism. ATP contacts are provided by residues 206-210 (HLGNG), 280-282 (DMR), and 328-332 (GVGEN). Glu-382 provides a ligand contact to Mg(2+).

Belongs to the acetokinase family. As to quaternary structure, homodimer. Requires Mg(2+) as cofactor. It depends on Mn(2+) as a cofactor.

It localises to the cytoplasm. It catalyses the reaction acetate + ATP = acetyl phosphate + ADP. The protein operates within metabolic intermediate biosynthesis; acetyl-CoA biosynthesis; acetyl-CoA from acetate: step 1/2. In terms of biological role, catalyzes the formation of acetyl phosphate from acetate and ATP. Can also catalyze the reverse reaction. This is Acetate kinase from Clavibacter sepedonicus (Clavibacter michiganensis subsp. sepedonicus).